The sequence spans 242 residues: Succinyl-CoA:3-ketoacid coenzyme A transferase subunit A (242 aa).

33 to 39 provides a ligand contact to CoA; that stretch reads GGFGLCG.

This sequence belongs to the 3-oxoacid CoA-transferase subunit A family. Heterodimer of a subunit A and a subunit B.

The catalysed reaction is a 3-oxo acid + succinyl-CoA = a 3-oxoacyl-CoA + succinate. It participates in bacterial outer membrane biogenesis; lipopolysaccharide biosynthesis. In Xanthomonas campestris pv. campestris (strain ATCC 33913 / DSM 3586 / NCPPB 528 / LMG 568 / P 25), this protein is Succinyl-CoA:3-ketoacid coenzyme A transferase subunit A (lpsI).